A 669-amino-acid chain; its full sequence is 5-taurinomethyluridine-[tRNA] synthase subunit MTO1, mitochondrial (669 aa).

The N-terminal 25 residues, 1-25 (MFLLRGRGHWAAASLGRRLPLRRLR), are a transit peptide targeting the mitochondrion. Residues 42–47 (GGGHAG), valine 154, serine 217, and glutamine 406 contribute to the FAD site. N6-methyllysine is present on lysine 507.

It belongs to the MnmG family. As to quaternary structure, homodimer; forms a dimer in the presence of potassium. Interacts with GTPBP3; forms the GTPBP3-MTO1 complex composed of homodimers of GTPBP3 and MTO1. FAD is required as a cofactor. Ubiquitously expressed in various tissues, but with markedly elevated expression in tissues of high metabolic rates.

Its subcellular location is the mitochondrion. It catalyses the reaction 5,10-methylenetetrahydrofolate + uridine(34) in tRNA + taurine + GTP + A + H2O = 5-taurinomethyluridine(34) in tRNA + 7,8-dihydrofolate + GDP + AH2 + phosphate + H(+). Its function is as follows. Component of the GTPBP3-MTO1 complex that catalyzes the 5-taurinomethyluridine (taum(5)U) modification at the 34th wobble position (U34) of mitochondrial tRNAs (mt-tRNAs), which plays a role in mt-tRNA decoding and mitochondrial translation. Taum(5)U formation on mammalian mt-tRNA requires the presence of both GTPBP3-mediated GTPase activity and MTO1 catalytic activity. The sequence is that of 5-taurinomethyluridine-[tRNA] synthase subunit MTO1, mitochondrial from Mus musculus (Mouse).